Consider the following 236-residue polypeptide: MKKKLYEGSSKTLYSSEEEFLLVMAFSDKATLENGEIIDVSGKGVLNNNISSFVMNKLEMIGIENHFIEKLNMREQLIQYVEMFPLQVVVSSVACGRFVKEFGMDEGFVFDKPIIDFKVKSREFKYPIVNEHQILNFGWLTKDEINTVKKQALRIYDFLSGLFIGIGIRLVECNLEFGRVFTGEESLVMLTDEISPDTCKLWHINSNERLGFELLEKDPAKAYESYKLIADRLKEK.

This sequence belongs to the SAICAR synthetase family.

It catalyses the reaction 5-amino-1-(5-phospho-D-ribosyl)imidazole-4-carboxylate + L-aspartate + ATP = (2S)-2-[5-amino-1-(5-phospho-beta-D-ribosyl)imidazole-4-carboxamido]succinate + ADP + phosphate + 2 H(+). The protein operates within purine metabolism; IMP biosynthesis via de novo pathway; 5-amino-1-(5-phospho-D-ribosyl)imidazole-4-carboxamide from 5-amino-1-(5-phospho-D-ribosyl)imidazole-4-carboxylate: step 1/2. The chain is Phosphoribosylaminoimidazole-succinocarboxamide synthase from Rickettsia bellii (strain OSU 85-389).